A 157-amino-acid polypeptide reads, in one-letter code: 2-C-methyl-D-erythritol 2,4-cyclodiphosphate synthase (157 aa).

Aspartate 8 and histidine 10 together coordinate a divalent metal cation. 4-CDP-2-C-methyl-D-erythritol 2-phosphate-binding positions include 8 to 10 (DVH) and 34 to 35 (HS). Histidine 42 lines the a divalent metal cation pocket. 4-CDP-2-C-methyl-D-erythritol 2-phosphate contacts are provided by residues 56 to 58 (DIG), 61 to 65 (FPDTD), 132 to 135 (TTTE), phenylalanine 139, and arginine 142.

It belongs to the IspF family. In terms of assembly, homotrimer. A divalent metal cation is required as a cofactor.

The enzyme catalyses 4-CDP-2-C-methyl-D-erythritol 2-phosphate = 2-C-methyl-D-erythritol 2,4-cyclic diphosphate + CMP. Its pathway is isoprenoid biosynthesis; isopentenyl diphosphate biosynthesis via DXP pathway; isopentenyl diphosphate from 1-deoxy-D-xylulose 5-phosphate: step 4/6. Functionally, involved in the biosynthesis of isopentenyl diphosphate (IPP) and dimethylallyl diphosphate (DMAPP), two major building blocks of isoprenoid compounds. Catalyzes the conversion of 4-diphosphocytidyl-2-C-methyl-D-erythritol 2-phosphate (CDP-ME2P) to 2-C-methyl-D-erythritol 2,4-cyclodiphosphate (ME-CPP) with a corresponding release of cytidine 5-monophosphate (CMP). The sequence is that of 2-C-methyl-D-erythritol 2,4-cyclodiphosphate synthase from Geobacter metallireducens (strain ATCC 53774 / DSM 7210 / GS-15).